The primary structure comprises 222 residues: Endonuclease V (222 aa).

Residues aspartate 34 and aspartate 102 each coordinate Mg(2+).

It belongs to the endonuclease V family. Mg(2+) serves as cofactor.

It is found in the cytoplasm. It catalyses the reaction Endonucleolytic cleavage at apurinic or apyrimidinic sites to products with a 5'-phosphate.. Functionally, DNA repair enzyme involved in the repair of deaminated bases. Selectively cleaves double-stranded DNA at the second phosphodiester bond 3' to a deoxyinosine leaving behind the intact lesion on the nicked DNA. The protein is Endonuclease V of Photorhabdus laumondii subsp. laumondii (strain DSM 15139 / CIP 105565 / TT01) (Photorhabdus luminescens subsp. laumondii).